A 272-amino-acid chain; its full sequence is Alpha-tubulin N-acetyltransferase (272 aa).

Positions Met1–Phe186 constitute an N-acetyltransferase domain. Residues Phe120–Arg133 and Ser156–Lys165 each bind acetyl-CoA. The tract at residues Thr216–Gly244 is disordered. The segment covering Ser224–Gly244 has biased composition (low complexity).

It belongs to the acetyltransferase ATAT1 family.

The enzyme catalyses L-lysyl-[alpha-tubulin] + acetyl-CoA = N(6)-acetyl-L-lysyl-[alpha-tubulin] + CoA + H(+). Functionally, specifically acetylates 'Lys-40' in alpha-tubulin on the lumenal side of microtubules. Promotes microtubule destabilization and accelerates microtubule dynamics; this activity may be independent of acetylation activity. Acetylates alpha-tubulin with a slow enzymatic rate, due to a catalytic site that is not optimized for acetyl transfer. Enters the microtubule through each end and diffuses quickly throughout the lumen of microtubules. Acetylates only long/old microtubules because of its slow acetylation rate since it does not have time to act on dynamically unstable microtubules before the enzyme is released. The chain is Alpha-tubulin N-acetyltransferase from Aedes aegypti (Yellowfever mosquito).